The following is a 64-amino-acid chain: DNA gyrase inhibitor YacG (64 aa).

Zn(2+) contacts are provided by cysteine 9, cysteine 12, cysteine 28, and cysteine 32. The interval 45–64 is disordered; that stretch reads NAIAGAPDMSDSDGWSEDQY. Positions 54 to 64 are enriched in acidic residues; sequence SDSDGWSEDQY.

This sequence belongs to the DNA gyrase inhibitor YacG family. In terms of assembly, interacts with GyrB. It depends on Zn(2+) as a cofactor.

In terms of biological role, inhibits all the catalytic activities of DNA gyrase by preventing its interaction with DNA. Acts by binding directly to the C-terminal domain of GyrB, which probably disrupts DNA binding by the gyrase. The sequence is that of DNA gyrase inhibitor YacG from Vibrio parahaemolyticus serotype O3:K6 (strain RIMD 2210633).